Reading from the N-terminus, the 395-residue chain is Glutamate N-acetyltransferase (395 aa).

Substrate is bound by residues T146, K169, T180, E263, N390, and T395. The Nucleophile role is filled by T180.

Belongs to the ArgJ family. Heterotetramer of two alpha and two beta chains.

It localises to the cytoplasm. It catalyses the reaction N(2)-acetyl-L-ornithine + L-glutamate = N-acetyl-L-glutamate + L-ornithine. Its pathway is amino-acid biosynthesis; L-arginine biosynthesis; L-ornithine and N-acetyl-L-glutamate from L-glutamate and N(2)-acetyl-L-ornithine (cyclic): step 1/1. In terms of biological role, catalyzes the transfer of the acetyl group from N(2)-acetylornithine to glutamate, forming N-acetylglutamate and L-ornithine. The chain is Glutamate N-acetyltransferase from Methanosarcina acetivorans (strain ATCC 35395 / DSM 2834 / JCM 12185 / C2A).